Here is a 651-residue protein sequence, read N- to C-terminus: Cylicin-1 (651 aa).

2 disordered regions span residues 110 to 241 and 267 to 615; these read LKKA…CSEN and NYSQ…CEPS. Basic and acidic residues-rich tracts occupy residues 111–129 and 146–173; these read KKAE…PLKK and QIVE…EQSK. Polar residues predominate over residues 186–195; sequence QNSKTVSKNC. Residues 196 to 205 show a composition bias toward basic and acidic residues; sequence SQKDKKDSKN. Residues 230–241 show a composition bias toward polar residues; the sequence is SNDPISEICSEN. A compositionally biased stretch (low complexity) spans 271–281; the sequence is NNSKNYSLKYT. 8 repeat units span residues 278-305, 306-342, 343-379, 380-417, 418-453, 454-491, 492-531, and 532-553. 6 stretches are compositionally biased toward basic and acidic residues: residues 284 to 308, 318 to 331, 338 to 368, 375 to 402, 413 to 441, and 448 to 482; these read TKKD…DAKK, KKDD…KDTE, GDSK…KYPE, GDAK…DAKK, LESK…KNDE, and SEPK…KNAE. Over residues 495–505 the composition is skewed to basic residues; the sequence is DKKHSKEKKGS. Basic and acidic residues predominate over residues 506–518; that stretch reads KKDIKKDARKDTE. Positions 529-538 are enriched in polar residues; the sequence is KTGFKTSTKI. The tract at residues 532 to 553 is 8 X approximate tandem repeats; sequence FKTSTKIKGSDTESEESLYKPG. Over residues 587–607 the composition is skewed to basic and acidic residues; it reads TFNEKGEKASTGRVPPSREKP.

In terms of assembly, interacts with proteins of spermatozoa head including ACTL7A, CCIN, FAM209A and SPACA1; the interactions may be necessary for proper acrosome attachment to the nuclear envelope. As to expression, testis.

The protein resides in the cytoplasm. The protein localises to the cytoskeleton. It localises to the perinuclear theca. Its subcellular location is the calyx. Plays a role in the establishment of normal sperm morphology during spermatogenesis and is required for acrosome attachment to the nuclear envelope. The chain is Cylicin-1 (CYLC1) from Homo sapiens (Human).